The following is an 86-amino-acid chain: MERNQRKVYTGRVVSDKMDKTITVLVETYKKDRLYGKRVKYSKKFKAHDENNSAKIGDIVRIQETRPLSKDKHFRLVEIVEEAVII.

The protein belongs to the universal ribosomal protein uS17 family. As to quaternary structure, part of the 30S ribosomal subunit.

In terms of biological role, one of the primary rRNA binding proteins, it binds specifically to the 5'-end of 16S ribosomal RNA. This is Small ribosomal subunit protein uS17 from Halalkalibacterium halodurans (strain ATCC BAA-125 / DSM 18197 / FERM 7344 / JCM 9153 / C-125) (Bacillus halodurans).